Here is a 73-residue protein sequence, read N- to C-terminus: Small ribosomal subunit protein bS18 (73 aa).

Belongs to the bacterial ribosomal protein bS18 family. As to quaternary structure, part of the 30S ribosomal subunit. Forms a tight heterodimer with protein bS6.

In terms of biological role, binds as a heterodimer with protein bS6 to the central domain of the 16S rRNA, where it helps stabilize the platform of the 30S subunit. This chain is Small ribosomal subunit protein bS18, found in Prochlorococcus marinus subsp. pastoris (strain CCMP1986 / NIES-2087 / MED4).